The primary structure comprises 285 residues: Retron Ec67 DNA adenine methylase (285 aa).

Positions 7, 11, 51, and 179 each coordinate S-adenosyl-L-methionine.

This sequence belongs to the N(4)/N(6)-methyltransferase family.

The enzyme catalyses a 2'-deoxyadenosine in DNA + S-adenosyl-L-methionine = an N(6)-methyl-2'-deoxyadenosine in DNA + S-adenosyl-L-homocysteine + H(+). In terms of biological role, an alpha subtype methylase that recognizes the double-stranded sequence 5'-GATC-3' and methylates A-2 on both strands. May play a regulatory role in the functions of the retron. The sequence is that of Retron Ec67 DNA adenine methylase from Escherichia coli.